The chain runs to 157 residues: Endoribonuclease YbeY (157 aa).

The Zn(2+) site is built by His-112, His-116, and His-122.

This sequence belongs to the endoribonuclease YbeY family. Requires Zn(2+) as cofactor.

It is found in the cytoplasm. In terms of biological role, single strand-specific metallo-endoribonuclease involved in late-stage 70S ribosome quality control and in maturation of the 3' terminus of the 16S rRNA. This is Endoribonuclease YbeY from Marinobacter nauticus (strain ATCC 700491 / DSM 11845 / VT8) (Marinobacter aquaeolei).